A 190-amino-acid polypeptide reads, in one-letter code: Elongation factor P-like protein (190 aa).

This sequence belongs to the elongation factor P family.

This Edwardsiella ictaluri (strain 93-146) protein is Elongation factor P-like protein.